The sequence spans 472 residues: 3-isopropylmalate dehydratase large subunit (472 aa).

The tract at residues 289–312 is disordered; sequence TWGTNPAQGTGVSQVVPSPDDAKD. Over residues 290–304 the composition is skewed to polar residues; it reads WGTNPAQGTGVSQVV. [4Fe-4S] cluster contacts are provided by cysteine 347, cysteine 407, and cysteine 410.

The protein belongs to the aconitase/IPM isomerase family. LeuC type 1 subfamily. As to quaternary structure, heterodimer of LeuC and LeuD. [4Fe-4S] cluster is required as a cofactor.

It catalyses the reaction (2R,3S)-3-isopropylmalate = (2S)-2-isopropylmalate. It participates in amino-acid biosynthesis; L-leucine biosynthesis; L-leucine from 3-methyl-2-oxobutanoate: step 2/4. Functionally, catalyzes the isomerization between 2-isopropylmalate and 3-isopropylmalate, via the formation of 2-isopropylmaleate. This Halalkalibacterium halodurans (strain ATCC BAA-125 / DSM 18197 / FERM 7344 / JCM 9153 / C-125) (Bacillus halodurans) protein is 3-isopropylmalate dehydratase large subunit.